The sequence spans 142 residues: Putative transmembrane protein INAFM1 (142 aa).

Residues 1–19 (MRGTSCVGGGAESPGGAGL) are compositionally biased toward gly residues. Residues 1–22 (MRGTSCVGGGAESPGGAGLSEG) are disordered. The chain crosses the membrane as a helical span at residues 36–56 (YFLCVSLAAVLLAVYYGLIWV). Disordered regions lie at residues 61–83 (PAAPAGPQPSAPSPPCAARPGVP) and 99–142 (VPGG…RRPG). The span at 64-83 (PAGPQPSAPSPPCAARPGVP) shows a compositional bias: pro residues. Over residues 99-111 (VPGGPRPQLQLPL) the composition is skewed to low complexity. Over residues 117–142 (YSDPDRRPSRQTPRETPEAAEGRRPG) the composition is skewed to basic and acidic residues.

It is found in the membrane. This is Putative transmembrane protein INAFM1 from Homo sapiens (Human).